The primary structure comprises 633 residues: Extracellular metalloproteinase 3 (633 aa).

Residues 1 to 18 (MHGLLLAGLLALPMNVLA) form the signal peptide. A propeptide spanning residues 19-246 (HPAEQHASNV…VHNVVDYVAS (228 aa)) is cleaved from the precursor. Asn410 carries N-linked (GlcNAc...) asparagine glycosylation. Residue His429 participates in Zn(2+) binding. The active site involves Glu430. His433 is a binding site for Zn(2+). Asn480 and Asn622 each carry an N-linked (GlcNAc...) asparagine glycan.

It belongs to the peptidase M36 family. It depends on Zn(2+) as a cofactor.

It is found in the secreted. Its function is as follows. Secreted metalloproteinase probably acting as a virulence factor. The protein is Extracellular metalloproteinase 3 (MEP3) of Trichophyton equinum (Horse ringworm fungus).